Consider the following 1480-residue polypeptide: Tubulin-specific chaperone D (1480 aa).

2 disordered regions span residues Met-1 to Gln-32 and Asn-453 to Pro-476. Low complexity-rich tracts occupy residues Ile-7–Gln-32 and Asn-453–Asn-463. The segment covering Asn-464–Pro-476 has biased composition (acidic residues). The HEAT 1 repeat unit spans residues Ile-482 to Val-520. The tract at residues Lys-859–Asn-880 is disordered. The stretch at Glu-886 to Tyr-922 is one HEAT 2 repeat. The interval Asn-1437–Ile-1480 is disordered. Positions Asp-1444–Asp-1468 are enriched in low complexity. A compositionally biased stretch (acidic residues) spans Asn-1469–Ile-1480.

The protein belongs to the TBCD family. In terms of assembly, supercomplex made of cofactors A to E. Cofactors A and D function by capturing and stabilizing tubulin in a quasi-native conformation. Cofactor E binds to the cofactor D-tubulin complex; interaction with cofactor C then causes the release of tubulin polypeptides that are committed to the native state.

Tubulin-folding protein; involved in the first step of the tubulin folding pathway. The sequence is that of Tubulin-specific chaperone D (tbcd) from Dictyostelium discoideum (Social amoeba).